The following is a 302-amino-acid chain: DDRGK domain-containing protein 1 (302 aa).

Residues 1 to 5 are Lumenal-facing; it reads MDGGG. A helical transmembrane segment spans residues 6 to 26; that stretch reads GMLGAVVCLLLVFAIFPLLLW. Residues 27-302 are Cytoplasmic-facing; it reads RRRSDAAHRL…DENAAAGTEL (276 aa). Disordered regions lie at residues 36 to 151 and 279 to 302; these read LPPQ…EEAR and DLEPKPQYNEESNLDENAAAGTEL. The segment covering 79 to 91 has biased composition (acidic residues); it reads VDDADSDLEEEIQ. Residues 103 to 151 show a composition bias toward basic and acidic residues; that stretch reads KRQDREAQRQAEEAARDSRRTKQDRYAEMRRKKDEEREAQERLMEEEAR.

It belongs to the DDRGK1 family.

The protein resides in the endoplasmic reticulum membrane. Its function is as follows. Substrate adapter for ufmylation, the covalent attachment of the ubiquitin-like modifier UFM1 to substrate proteins. The sequence is that of DDRGK domain-containing protein 1 from Oryza sativa subsp. japonica (Rice).